Reading from the N-terminus, the 357-residue chain is Inositol-tetrakisphosphate 1-kinase 3 (357 aa).

Lys-56 and Lys-98 together coordinate 1D-myo-inositol 1,3,4-trisphosphate. Arg-133 and Lys-183 together coordinate ATP. 2 residues coordinate 1D-myo-inositol 1,3,4-trisphosphate: His-190 and Lys-222. Residues 211–222 (QEFVNHGGVLFK), Ser-237, and Ser-262 contribute to the ATP site. Mg(2+)-binding residues include Asp-302, Asp-317, and Asn-319. Position 319 (Asn-319) interacts with 1D-myo-inositol 1,3,4-trisphosphate.

This sequence belongs to the ITPK1 family. Monomer. The cofactor is Mg(2+). Expressed in roots, leaves, flowers, anthers and embryos.

It catalyses the reaction 1D-myo-inositol 3,4,5,6-tetrakisphosphate + ATP = 1D-myo-inositol 1,3,4,5,6-pentakisphosphate + ADP + H(+). The catalysed reaction is 1D-myo-inositol 1,3,4-trisphosphate + ATP = 1D-myo-inositol 1,3,4,5-tetrakisphosphate + ADP + H(+). It carries out the reaction 1D-myo-inositol 1,3,4-trisphosphate + ATP = 1D-myo-inositol 1,3,4,6-tetrakisphosphate + ADP + H(+). Functionally, kinase that can phosphorylate various inositol polyphosphate such as Ins(3,4,5,6)P4 or Ins(1,3,4)P3 and participates in phytic acid biosynthesis in developing seeds. Phytic acid is the primary storage form of phosphorus in cereal grains and other plant seeds. The sequence is that of Inositol-tetrakisphosphate 1-kinase 3 from Oryza sativa subsp. japonica (Rice).